Reading from the N-terminus, the 203-residue chain is Ras-related protein Rab-13 (203 aa).

The GTP site is built by Ser17, Gly18, Gly20, Lys21, Thr22, Cys23, and Thr40. Thr22 is a Mg(2+) binding site. The Switch 1 motif lies at 31–45; sequence DNFNNTYISTIGIDF. Thr40 provides a ligand contact to Mg(2+). Lys58 is covalently cross-linked (Glycyl lysine isopeptide (Lys-Gly) (interchain with G-Cter in ubiquitin)). Asp63 contacts Mg(2+). The Switch 2 motif lies at 63-80; sequence DTAGQERFKTITTAYYRG. Gly66, Asn121, Lys122, Asp124, Ala152, and Lys153 together coordinate GTP. Cysteine methyl ester is present on Cys200. A lipid anchor (S-geranylgeranyl cysteine) is attached at Cys200. Positions 201-203 are cleaved as a propeptide — removed in mature form; the sequence is SLA.

This sequence belongs to the small GTPase superfamily. Rab family. As to quaternary structure, interacts (GTP-bound form) with MICALL2; competes with RAB8A and is involved in tight junctions assembly. Interacts (GTP-bound form) with MICALL1. Interacts (GTP-bound form) with MICAL1, MICAL3, MICALCL, EHBP1 and EHBP1L1; ternary complexes of RAB8A, RAB13 and either MICAL1 or EHBP1L1 are possible. Interacts with PRKACA; downstream effector of RAB13 involved in tight junction assembly. Interacts with GRB2; may recruit RAB13 to the leading edge of migrating endothelial cells where it can activate RHOA. Interacts (isoprenylated form) with PDE6D; dissociates RAB13 from membranes. Interacts with BICDL2/BICDR2. Interacts with LEPROT and LEPROTL1. The cofactor is Mg(2+). Post-translationally, ubiquitinated via 'Lys-11'-linked ubiquitination on Lys-58; impairing the recruitment of guanosine diphosphate (GDP) dissociation inhibitor 1/GDI1.

The protein localises to the cell membrane. Its subcellular location is the cytoplasmic vesicle membrane. It localises to the cell junction. It is found in the tight junction. The protein resides in the golgi apparatus. The protein localises to the trans-Golgi network membrane. Its subcellular location is the recycling endosome membrane. It localises to the cell projection. It is found in the lamellipodium. The enzyme catalyses GTP + H2O = GDP + phosphate + H(+). Its activity is regulated as follows. Regulated by guanine nucleotide exchange factors (GEFs) including DENND1C, which promote the exchange of bound GDP for free GTP. Regulated by GTPase activating proteins (GAPs) which increase the GTP hydrolysis activity. Inhibited by GDP dissociation inhibitors (GDIs). Activated in response to insulin. The small GTPases Rab are key regulators of intracellular membrane trafficking, from the formation of transport vesicles to their fusion with membranes. Rabs cycle between an inactive GDP-bound form and an active GTP-bound form that is able to recruit to membranes different sets of downstream effectors directly responsible for vesicle formation, movement, tethering and fusion. RAB13 is involved in endocytic recycling and regulates the transport to the plasma membrane of transmembrane proteins like the tight junction protein OCLN/occludin. Thereby, it regulates the assembly and the activity of tight junctions. Moreover, it may also regulate tight junction assembly by activating the PKA signaling pathway and by reorganizing the actin cytoskeleton through the activation of the downstream effectors PRKACA and MICALL2 respectively. Through its role in tight junction assembly, may play a role in the establishment of Sertoli cell barrier. Plays also a role in angiogenesis through regulation of endothelial cells chemotaxis. Also involved in neurite outgrowth. Has also been proposed to play a role in post-Golgi membrane trafficking from the TGN to the recycling endosome. Finally, it has been involved in insulin-induced transport to the plasma membrane of the glucose transporter GLUT4 and therefore may play a role in glucose homeostasis. This is Ras-related protein Rab-13 (RAB13) from Bos taurus (Bovine).